We begin with the raw amino-acid sequence, 110 residues long: UPF0122 protein BCA_3946 (110 aa).

It belongs to the UPF0122 family.

Functionally, might take part in the signal recognition particle (SRP) pathway. This is inferred from the conservation of its genetic proximity to ftsY/ffh. May be a regulatory protein. The chain is UPF0122 protein BCA_3946 from Bacillus cereus (strain 03BB102).